The chain runs to 518 residues: Nitrogenase iron-iron protein alpha chain (518 aa).

Residues C49 and C75 each contribute to the [8Fe-7S] cluster site. [8Fe-9S-C-homocitryl] cluster-binding residues include C257 and H423.

In terms of assembly, hexamer of two alpha, two beta, and two delta chains. Requires [8Fe-7S] cluster as cofactor. [8Fe-9S-C-homocitryl] cluster serves as cofactor.

It catalyses the reaction N2 + 8 reduced [2Fe-2S]-[ferredoxin] + 16 ATP + 16 H2O = H2 + 8 oxidized [2Fe-2S]-[ferredoxin] + 2 NH4(+) + 16 ADP + 16 phosphate + 6 H(+). Functionally, this iron-iron protein is part of the nitrogenase complex that catalyzes the key enzymatic reactions in nitrogen fixation. Other nitrogenase complexes utilize a molybdenum-iron protein or a vanadium-iron protein. The protein is Nitrogenase iron-iron protein alpha chain (anfD) of Ruminiclostridium hungatei (Clostridium hungatei).